Here is a 568-residue protein sequence, read N- to C-terminus: Potassium-transporting ATPase potassium-binding subunit (568 aa).

A run of 10 helical transmembrane segments spans residues 3 to 23, 64 to 84, 133 to 153, 179 to 199, 255 to 275, 281 to 301, 375 to 395, 418 to 438, 497 to 517, and 535 to 555; these read TEIL…YPLG, FLKA…VLLV, FVIM…MAGV, ILLP…TPMG, MVEC…LGFY, LGYS…FINV, FGGV…AVFI, IATF…AISS, IVLI…AGLL, and VTFA…SFFP.

This sequence belongs to the KdpA family. In terms of assembly, the system is composed of three essential subunits: KdpA, KdpB and KdpC.

It is found in the cell inner membrane. Part of the high-affinity ATP-driven potassium transport (or Kdp) system, which catalyzes the hydrolysis of ATP coupled with the electrogenic transport of potassium into the cytoplasm. This subunit binds the periplasmic potassium ions and delivers the ions to the membrane domain of KdpB through an intramembrane tunnel. In Bacteroides fragilis (strain ATCC 25285 / DSM 2151 / CCUG 4856 / JCM 11019 / LMG 10263 / NCTC 9343 / Onslow / VPI 2553 / EN-2), this protein is Potassium-transporting ATPase potassium-binding subunit.